We begin with the raw amino-acid sequence, 283 residues long: Pantothenate synthetase (283 aa).

An ATP-binding site is contributed by methionine 30 to histidine 37. The active-site Proton donor is histidine 37. Position 61 (glutamine 61) interacts with (R)-pantoate. Glutamine 61 is a binding site for beta-alanine. An ATP-binding site is contributed by glycine 147–aspartate 150. Glutamine 153 contributes to the (R)-pantoate binding site. ATP contacts are provided by residues isoleucine 176 and valine 184 to arginine 187.

The protein belongs to the pantothenate synthetase family. As to quaternary structure, homodimer.

The protein resides in the cytoplasm. The enzyme catalyses (R)-pantoate + beta-alanine + ATP = (R)-pantothenate + AMP + diphosphate + H(+). The protein operates within cofactor biosynthesis; (R)-pantothenate biosynthesis; (R)-pantothenate from (R)-pantoate and beta-alanine: step 1/1. In terms of biological role, catalyzes the condensation of pantoate with beta-alanine in an ATP-dependent reaction via a pantoyl-adenylate intermediate. In Pelodictyon phaeoclathratiforme (strain DSM 5477 / BU-1), this protein is Pantothenate synthetase.